The chain runs to 563 residues: BOS complex subunit NCLN (563 aa).

The signal sequence occupies residues 1 to 42; it reads MLEEAGEVLENVLKASCLPLGFIVFLPAVLLLVAPPLPAADA. Topologically, residues 43–522 are lumenal; sequence AHEFTVYRMQ…VMNAYRVKPA (480 aa). Asn241 and Asn428 each carry an N-linked (GlcNAc...) asparagine glycan. Residues 523-543 traverse the membrane as a helical segment; it reads IFDLLLALCIGAYLGMAYTAV. Topologically, residues 544–563 are cytoplasmic; sequence QHFHVLYKTVQRLLLKAKAQ.

This sequence belongs to the nicastrin family. In terms of assembly, component of the back of Sec61 (BOS) complex, composed of NCLN/Nicalin, NOMO1 and TMEM147. The BOS complex is part of the multi-pass translocon (MPT) complex, composed of three subcomplexes, the GEL complex (composed of RAB5IF/OPTI and TMCO1), the BOS complex (composed of NCLN/Nicalin, NOMO1 and TMEM147) and the PAT complex (composed of WDR83OS/Asterix and CCDC47). The MPT complex associates with the SEC61 complex.

The protein resides in the endoplasmic reticulum membrane. In terms of biological role, component of the multi-pass translocon (MPT) complex that mediates insertion of multi-pass membrane proteins into the lipid bilayer of membranes. The MPT complex takes over after the SEC61 complex: following membrane insertion of the first few transmembrane segments of proteins by the SEC61 complex, the MPT complex occludes the lateral gate of the SEC61 complex to promote insertion of subsequent transmembrane regions. May antagonize Nodal signaling and subsequent organization of axial structures during mesodermal patterning, via its interaction with NOMO. The chain is BOS complex subunit NCLN (Ncln) from Rattus norvegicus (Rat).